Reading from the N-terminus, the 350-residue chain is MSSKKLRRVGLSPELCDRLSRYQIVNCQHFLSLSPLELMKVTGLSYRGVHELLHTVSKACAPQMQTAYELKTRRSAHLSPAFLSTTLCALDEALHGGVPCGSLTEITGPPGCGKTQFCIMMSVLATLPTSLGGLEGAVVYIDTESAFTAERLVEIAESRFPQYFNTEEKLLLTSSRVHLCRELTCEGLLQRLESLEEEIISKGVKLVIVDSIASVVRKEFDPKLQGNIKERNKFLGKGASLLKYLAGEFSIPVILTNQITTHLSGALPSQADLVSPADDLSLSEGTSGSSCLVAALGNTWGHCVNTRLILQYLDSERRQILIAKSPLAAFTSFVYTIKGEGLVLQGHERP.

An interaction with RAD51C region spans residues 1–75 (MSSKKLRRVG…TAYELKTRRS (75 aa)). Residue 108–115 (GPPGCGKT) participates in ATP binding.

This sequence belongs to the RecA family. RAD51 subfamily. In terms of assembly, part of the BCDX2 complex consisting of RAD51B, RAD51C, RAD51D and XRCC2; the complex has a ring-like structure arranged into a flat disc around a central channel. The BCDX2 subcomplex RAD51B:RAD51C interacts with RAD51. Interacts with SWSAP1; involved in homologous recombination repair. Interacts with HELQ. In terms of processing, phosphorylated on tyrosine residues by BCR-ABL. Expressed in a wide range of tissues.

The protein resides in the nucleus. Its function is as follows. Involved in the homologous recombination repair (HRR) pathway of double-stranded DNA breaks arising during DNA replication or induced by DNA-damaging agents. May promote the assembly of presynaptic RAD51 nucleoprotein filaments. Binds single-stranded DNA and double-stranded DNA and has DNA-dependent ATPase activity. Part of the RAD51 paralog protein complex BCDX2 which acts in the BRCA1-BRCA2-dependent HR pathway. Upon DNA damage, BCDX2 acts downstream of BRCA2 recruitment and upstream of RAD51 recruitment. BCDX2 binds predominantly to the intersection of the four duplex arms of the Holliday junction and to junction of replication forks. The BCDX2 complex was originally reported to bind single-stranded DNA, single-stranded gaps in duplex DNA and specifically to nicks in duplex DNA. The BCDX2 subcomplex RAD51B:RAD51C exhibits single-stranded DNA-dependent ATPase activity suggesting an involvement in early stages of the HR pathway. This chain is DNA repair protein RAD51 homolog 2 (Rad51b), found in Mus musculus (Mouse).